The following is a 576-amino-acid chain: Proline--tRNA ligase (576 aa).

Belongs to the class-II aminoacyl-tRNA synthetase family. ProS type 1 subfamily. Homodimer.

Its subcellular location is the cytoplasm. The enzyme catalyses tRNA(Pro) + L-proline + ATP = L-prolyl-tRNA(Pro) + AMP + diphosphate. Functionally, catalyzes the attachment of proline to tRNA(Pro) in a two-step reaction: proline is first activated by ATP to form Pro-AMP and then transferred to the acceptor end of tRNA(Pro). As ProRS can inadvertently accommodate and process non-cognate amino acids such as alanine and cysteine, to avoid such errors it has two additional distinct editing activities against alanine. One activity is designated as 'pretransfer' editing and involves the tRNA(Pro)-independent hydrolysis of activated Ala-AMP. The other activity is designated 'posttransfer' editing and involves deacylation of mischarged Ala-tRNA(Pro). The misacylated Cys-tRNA(Pro) is not edited by ProRS. The protein is Proline--tRNA ligase of Psychrobacter sp. (strain PRwf-1).